A 493-amino-acid polypeptide reads, in one-letter code: Alpha-amylase-related protein (493 aa).

A signal peptide spans M1 to A19. A Pyrrolidone carboxylic acid modification is found at Q20. Residues C47 and C103 are joined by a disulfide bond. Positions 117, 168, and 177 each coordinate Ca(2+). An intrachain disulfide couples C156 to C170. R205 lines the chloride pocket. The active-site Nucleophile is the D207. H211 contacts Ca(2+). The Proton donor role is filled by E244. Chloride contacts are provided by N307 and R342. 3 cysteine pairs are disulfide-bonded: C375–C381, C417–C440, and C447–C459.

The protein belongs to the glycosyl hydrolase 13 family. In terms of assembly, monomer. Ca(2+) is required as a cofactor. It depends on chloride as a cofactor.

Its subcellular location is the secreted. It catalyses the reaction Endohydrolysis of (1-&gt;4)-alpha-D-glucosidic linkages in polysaccharides containing three or more (1-&gt;4)-alpha-linked D-glucose units.. The chain is Alpha-amylase-related protein (Amyrel) from Drosophila simulans (Fruit fly).